Here is a 348-residue protein sequence, read N- to C-terminus: tRNA pseudouridine synthase D (348 aa).

Phenylalanine 27 contributes to the substrate binding site. Catalysis depends on aspartate 80, which acts as the Nucleophile. Asparagine 129 lines the substrate pocket. The 149-residue stretch at 155-303 (GVPNYFGSQR…VESARRAVLL (149 aa)) folds into the TRUD domain. Position 329 (phenylalanine 329) interacts with substrate.

The protein belongs to the pseudouridine synthase TruD family.

It catalyses the reaction uridine(13) in tRNA = pseudouridine(13) in tRNA. Its function is as follows. Responsible for synthesis of pseudouridine from uracil-13 in transfer RNAs. The polypeptide is tRNA pseudouridine synthase D (Pectobacterium carotovorum subsp. carotovorum (strain PC1)).